Here is a 422-residue protein sequence, read N- to C-terminus: Probable sucrose-phosphatase 2 (422 aa).

The protein belongs to the sucrose phosphatase family. As to quaternary structure, homodimer. It depends on Mg(2+) as a cofactor.

The enzyme catalyses sucrose 6(F)-phosphate + H2O = sucrose + phosphate. It participates in glycan biosynthesis; sucrose biosynthesis; sucrose from D-fructose 6-phosphate and UDP-alpha-D-glucose: step 2/2. In terms of biological role, catalyzes the final step of sucrose synthesis. The protein is Probable sucrose-phosphatase 2 (SPP2) of Arabidopsis thaliana (Mouse-ear cress).